A 170-amino-acid chain; its full sequence is MORN repeat-containing protein 5 (170 aa).

MORN repeat units lie at residues 8 to 30, 31 to 53, and 54 to 75; these read YFGEYINGRMEGSAEYILPTDTR, YIGEMKDGMFHGEGTLFFPSGSR, and FDAIWKKGLVVKGKYTFNDGLQ.

As to expression, only detected in testis (at protein level).

Its subcellular location is the cell projection. It localises to the cilium. The protein localises to the flagellum. This is MORN repeat-containing protein 5 (Morn5) from Mus musculus (Mouse).